Here is a 183-residue protein sequence, read N- to C-terminus: Segregation and condensation protein B (183 aa).

This sequence belongs to the ScpB family. As to quaternary structure, homodimer. Homodimerization may be required to stabilize the binding of ScpA to the Smc head domains. Component of a cohesin-like complex composed of ScpA, ScpB and the Smc homodimer, in which ScpA and ScpB bind to the head domain of Smc. The presence of the three proteins is required for the association of the complex with DNA.

It is found in the cytoplasm. Participates in chromosomal partition during cell division. May act via the formation of a condensin-like complex containing Smc and ScpA that pull DNA away from mid-cell into both cell halves. This Streptococcus pyogenes serotype M1 protein is Segregation and condensation protein B.